The sequence spans 232 residues: Protein shisa-3 (232 aa).

An N-terminal signal peptide occupies residues 1–19 (MRLLGCFFLIFLTWGSARA). Residues 20–93 (QGEYCHGWLD…GVSAQPVYVP (74 aa)) are Lumenal-facing. The helical transmembrane segment at 94–114 (FLIVGSIFIAFIIVGSLVAVY) threads the bilayer. Over 115–232 (CCTCLRPKQT…NKSCPDFRQS (118 aa)) the chain is Cytoplasmic. Residues 146-185 (TSGNLRTPSRQSSTATSSTSTGGSVRRLSSSRADPGYLVS) form a disordered region. The span at 151 to 177 (RTPSRQSSTATSSTSTGGSVRRLSSSR) shows a compositional bias: low complexity.

It belongs to the shisa family. As to quaternary structure, interacts with fzd8 and fgfr1.

It is found in the endoplasmic reticulum membrane. Functionally, plays an essential role in the maturation of presomitic mesoderm cells by individual attenuation of both fgf and wnt signaling. Regulates head and somite developmen. Inhibits both wnt and fgf signaling through the regulation of protein maturation and cell surface transportation of their receptors within the endoplasmic reticulum. This Xenopus laevis (African clawed frog) protein is Protein shisa-3 (shisa3).